The chain runs to 395 residues: Transcription termination/antitermination protein NusA (395 aa).

An S1 motif domain is found at 137 to 201; sequence NSVLMGQVIL…TKKGLLLELS (65 aa). 2 KH domains span residues 243-291 and 331-378; these read SHNA…TLAL and KVRL…NESE.

The protein belongs to the NusA family. As to quaternary structure, monomer. Binds directly to the core enzyme of the DNA-dependent RNA polymerase and to nascent RNA.

It localises to the cytoplasm. Functionally, participates in both transcription termination and antitermination. This Helicobacter pylori (strain ATCC 700392 / 26695) (Campylobacter pylori) protein is Transcription termination/antitermination protein NusA.